The primary structure comprises 356 residues: sn-glycerol-3-phosphate import ATP-binding protein UgpC (356 aa).

Positions 4–235 (LKLQAVTKSW…PASLFVASFI (232 aa)) constitute an ABC transporter domain. 37 to 44 (GPSGCGKS) serves as a coordination point for ATP.

This sequence belongs to the ABC transporter superfamily. sn-glycerol-3-phosphate importer (TC 3.A.1.1.3) family. As to quaternary structure, the complex is composed of two ATP-binding proteins (UgpC), two transmembrane proteins (UgpA and UgpE) and a solute-binding protein (UgpB).

It localises to the cell inner membrane. It catalyses the reaction sn-glycerol 3-phosphate(out) + ATP + H2O = sn-glycerol 3-phosphate(in) + ADP + phosphate + H(+). Its function is as follows. Part of the ABC transporter complex UgpBAEC involved in sn-glycerol-3-phosphate (G3P) import. Responsible for energy coupling to the transport system. The protein is sn-glycerol-3-phosphate import ATP-binding protein UgpC of Escherichia coli O6:K15:H31 (strain 536 / UPEC).